A 308-amino-acid chain; its full sequence is Ornithine carbamoyltransferase (308 aa).

Carbamoyl phosphate-binding positions include 56–59 (STRT), Q83, R107, and 134–137 (HPCQ). L-ornithine-binding positions include N165, D225, and 229-230 (SM). Carbamoyl phosphate is bound by residues 266-267 (CL) and R294.

This sequence belongs to the aspartate/ornithine carbamoyltransferase superfamily. OTCase family.

The protein resides in the cytoplasm. The catalysed reaction is carbamoyl phosphate + L-ornithine = L-citrulline + phosphate + H(+). The protein operates within amino-acid biosynthesis; L-arginine biosynthesis; L-arginine from L-ornithine and carbamoyl phosphate: step 1/3. Reversibly catalyzes the transfer of the carbamoyl group from carbamoyl phosphate (CP) to the N(epsilon) atom of ornithine (ORN) to produce L-citrulline. In Cereibacter sphaeroides (strain ATCC 17023 / DSM 158 / JCM 6121 / CCUG 31486 / LMG 2827 / NBRC 12203 / NCIMB 8253 / ATH 2.4.1.) (Rhodobacter sphaeroides), this protein is Ornithine carbamoyltransferase.